The sequence spans 112 residues: Large ribosomal subunit protein uL22 (112 aa).

It belongs to the universal ribosomal protein uL22 family. In terms of assembly, part of the 50S ribosomal subunit.

This protein binds specifically to 23S rRNA; its binding is stimulated by other ribosomal proteins, e.g. L4, L17, and L20. It is important during the early stages of 50S assembly. It makes multiple contacts with different domains of the 23S rRNA in the assembled 50S subunit and ribosome. Functionally, the globular domain of the protein is located near the polypeptide exit tunnel on the outside of the subunit, while an extended beta-hairpin is found that lines the wall of the exit tunnel in the center of the 70S ribosome. The sequence is that of Large ribosomal subunit protein uL22 from Lawsonia intracellularis (strain PHE/MN1-00).